The chain runs to 260 residues: ATP-dependent zinc metalloprotease FTSH, chloroplastic (260 aa).

H219 provides a ligand contact to Zn(2+). Residue E220 is part of the active site. H223 contributes to the Zn(2+) binding site.

The protein in the N-terminal section; belongs to the AAA ATPase family. It in the C-terminal section; belongs to the peptidase M41 family. Zn(2+) is required as a cofactor.

The protein resides in the plastid. It localises to the chloroplast thylakoid membrane. Its function is as follows. Probable ATP-dependent zinc metallopeptidase. The chain is ATP-dependent zinc metalloprotease FTSH, chloroplastic from Helianthus annuus (Common sunflower).